We begin with the raw amino-acid sequence, 530 residues long: Amidase FVEG_08295 (530 aa).

Catalysis depends on charge relay system residues lysine 138 and serine 214. Substrate-binding positions include serine 214 and 235-238; that span reads IAGS. Serine 238 serves as the catalytic Acyl-ester intermediate.

This sequence belongs to the amidase family.

The enzyme catalyses a monocarboxylic acid amide + H2O = a monocarboxylate + NH4(+). It functions in the pathway xenobiotic degradation. Functionally, amidase; part of the Fusarium detoxification of benzoxazolinone cluster 1 (FDB1) involved in the degradation of benzoxazolinones produced by the host plant. Maize, wheat, and rye produce the 2 benzoxazinone phytoanticipins 2,4-dihy-droxy-7-methoxy-1,4-benzoxazin-3-one (DIMBOA) and 2,4-dihydroxy-1,4-benzoxazin-3-one (DIBOA) that, due to their inherent instability once released, spontaneously degrade to the more stable corresponding benzoxazolinones, 6-methoxy-2-benzoxazolinone (MBOA) and 2-benzoxazolinone (BOA), respectively. The first step in the detoxification of benzoxazolinones involves the hydrolysis of the cyclic ester bond of benzoxazolinones by the FDB1 cluster gamma-lactamase MBL1 to aminophenols. MBL1 is able to convert BOA into 2-aminophenol (2-AP), as well as MBOA into 5-methoxy-2-aminophenol (2-AMP). The FDB2 cluster N-malonyltransferase FDB2/NAT1 then metabolizes aminophenols via N-malonylation to non-toxic malonamic acids. FDB2/NAT1 converts 2-AP into N-(2-hydroxyphenyl) malonamic acid (HPMA) and 2-AMP into N-(2-hydroxy-4-methoxyphenyl) malonamic acid (HMPMA). The duplicated dienlactone hydrolases DLH1 and DLH2 may provide redundant function for hydrolyzing the lactone moiety in the BOA molecule. The roles of the amidases an other enzymes encoded by the 2 FDB clusters have not been identified so far. The chain is Amidase FVEG_08295 from Gibberella moniliformis (strain M3125 / FGSC 7600) (Maize ear and stalk rot fungus).